The sequence spans 268 residues: Inositol monophosphatase 3 (268 aa).

Glutamate 71, aspartate 91, leucine 93, and aspartate 94 together coordinate Mg(2+). Glutamate 71 provides a ligand contact to substrate. Residues leucine 93 to threonine 96, glycine 194 to cysteine 196, glutamate 213, and aspartate 221 each bind substrate. Aspartate 221 is a Mg(2+) binding site.

This sequence belongs to the inositol monophosphatase superfamily. Mg(2+) serves as cofactor. Expressed in the shoot apex, roots, stems, leaves, flowers and young and mature green fruits.

The catalysed reaction is a myo-inositol phosphate + H2O = myo-inositol + phosphate. It participates in polyol metabolism; myo-inositol biosynthesis; myo-inositol from D-glucose 6-phosphate: step 2/2. Its function is as follows. Responsible for the provision of inositol required for synthesis of phosphatidylinositol and polyphosphoinositides. The polypeptide is Inositol monophosphatase 3 (IMP3) (Solanum lycopersicum (Tomato)).